Consider the following 23-residue polypeptide: KKDGYIVDSNGCAPECFPTNXGC.

The LCN-type CS-alpha/beta domain occupies 2-23; the sequence is KDGYIVDSNGCAPECFPTNXGC.

In terms of processing, contains 4 disulfide bonds. As to expression, expressed by the venom gland.

It localises to the secreted. In terms of biological role, excitatory insect toxins induce a spastic paralysis. They bind voltage-independently at site-4 of sodium channels (Nav) and shift the voltage of activation toward more negative potentials thereby affecting sodium channel activation and promoting spontaneous and repetitive firing. Is lethal to mice. Is about 1% of the total protein in the venom. This chain is Toxin Acra2, found in Androctonus crassicauda (Arabian fat-tailed scorpion).